The sequence spans 206 residues: Guanylate kinase (206 aa).

In terms of domain architecture, Guanylate kinase-like spans 13-193 (PLLLVVSGPS…AVSEIMSIIS (181 aa)). 20–27 (GPSGVGKD) contacts ATP.

It belongs to the guanylate kinase family.

It localises to the cytoplasm. It carries out the reaction GMP + ATP = GDP + ADP. Essential for recycling GMP and indirectly, cGMP. The chain is Guanylate kinase from Dehalococcoides mccartyi (strain ATCC BAA-2266 / KCTC 15142 / 195) (Dehalococcoides ethenogenes (strain 195)).